A 286-amino-acid polypeptide reads, in one-letter code: Thiamine-monophosphate kinase (286 aa).

4 residues coordinate Mg(2+): Asp22, Ser36, Thr37, and Asp38. A substrate-binding site is contributed by Asp45. Mg(2+) contacts are provided by Asp66 and Asp111. Residues 110–111 (GD) and Arg136 contribute to the ATP site. Mg(2+) is bound at residue Asp191. Ser193 contacts ATP. Asp194 contributes to the Mg(2+) binding site. Tyr282 provides a ligand contact to substrate.

It belongs to the thiamine-monophosphate kinase family.

The enzyme catalyses thiamine phosphate + ATP = thiamine diphosphate + ADP. The protein operates within cofactor biosynthesis; thiamine diphosphate biosynthesis; thiamine diphosphate from thiamine phosphate: step 1/1. Functionally, catalyzes the ATP-dependent phosphorylation of thiamine-monophosphate (TMP) to form thiamine-pyrophosphate (TPP), the active form of vitamin B1. This Methanospirillum hungatei JF-1 (strain ATCC 27890 / DSM 864 / NBRC 100397 / JF-1) protein is Thiamine-monophosphate kinase.